The sequence spans 668 residues: UvrABC system protein B (668 aa).

A Helicase ATP-binding domain is found at 25–176; sequence THLQSGHSRQ…DQRQLLRNLA (152 aa). ATP is bound at residue 38-45; it reads GATGTGKT. The Beta-hairpin motif lies at 91-114; it reads YYDYYQPEAYIPVTDTFIEKTASI. The 163-residue stretch at 429-591 folds into the Helicase C-terminal domain; sequence QVDDLLAEIQ…ITPQPVKKGS (163 aa). The UVR domain maps to 626-661; sequence PELITQLEAQMKEAAKNLEFEEAAKYRDRIKNLRSK.

The protein belongs to the UvrB family. In terms of assembly, forms a heterotetramer with UvrA during the search for lesions. Interacts with UvrC in an incision complex.

The protein localises to the cytoplasm. Its function is as follows. The UvrABC repair system catalyzes the recognition and processing of DNA lesions. A damage recognition complex composed of 2 UvrA and 2 UvrB subunits scans DNA for abnormalities. Upon binding of the UvrA(2)B(2) complex to a putative damaged site, the DNA wraps around one UvrB monomer. DNA wrap is dependent on ATP binding by UvrB and probably causes local melting of the DNA helix, facilitating insertion of UvrB beta-hairpin between the DNA strands. Then UvrB probes one DNA strand for the presence of a lesion. If a lesion is found the UvrA subunits dissociate and the UvrB-DNA preincision complex is formed. This complex is subsequently bound by UvrC and the second UvrB is released. If no lesion is found, the DNA wraps around the other UvrB subunit that will check the other stand for damage. This is UvrABC system protein B from Acaryochloris marina (strain MBIC 11017).